A 368-amino-acid chain; its full sequence is Glutamate 5-kinase (368 aa).

An ATP-binding site is contributed by Lys9. Substrate is bound by residues Ser49, Asp136, and Asn148. Residues 168–169 (TD) and 210–216 (TGGMMTK) each bind ATP. The PUA domain occupies 275–353 (AGIITIDNGA…ADIENVLGYE (79 aa)).

The protein belongs to the glutamate 5-kinase family.

It localises to the cytoplasm. It carries out the reaction L-glutamate + ATP = L-glutamyl 5-phosphate + ADP. It participates in amino-acid biosynthesis; L-proline biosynthesis; L-glutamate 5-semialdehyde from L-glutamate: step 1/2. Catalyzes the transfer of a phosphate group to glutamate to form L-glutamate 5-phosphate. This chain is Glutamate 5-kinase, found in Haemophilus influenzae (strain PittEE).